The chain runs to 295 residues: Tyrosine transport system permease protein (295 aa).

The next 8 helical transmembrane spans lie at 3–23, 57–77, 81–101, 122–142, 173–193, 200–220, 232–252, and 256–276; these read GIIS…GVYI, VVAT…TGIL, FKIS…SINL, ISPI…LDLF, ILGL…MAQF, NMGI…ITLF, IIVG…LGML, and LKLI…LNIS.

The protein belongs to the binding-protein-dependent transport system permease family. In terms of assembly, the complex is probably composed of two ATP-binding proteins (CDR20291_0806), two transmembrane proteins (CDR20291_0807) and a solute-binding protein (CDR20291_0805).

It localises to the cell membrane. Its function is as follows. Probably part of an ABC transporter complex involved in tyrosine uptake. May also import phenylalanine. Probably responsible for the translocation of the substrate across the membrane. The polypeptide is Tyrosine transport system permease protein (Clostridioides difficile (strain R20291) (Peptoclostridium difficile)).